A 337-amino-acid chain; its full sequence is MGEQRPLALAWSPWHDRLHRRLHQHPQLLPQRQPLLLAVSGGQDSMALLVLLQELQRLHHWPLNIWHGDHGWHSGSAVIAADLRSWCQQRDLPIQVDQAPQGSTASEASARHWRYSQLQQRAEELGADVVTGHTASDRAETLLLQLARGTDLAGLGALRPVRPLFNDSPDGAQLRRPLLGFSRADTAAVCRDLQVPIWHDPSNQSPAFARNRIRAEVLPVLEQLHPGCSQRMANLAERTSQLRDTQQELSQLALQPLRTSTGLDRRRLGALQPSTRRQLLVIWLAQQGVTALNAALLEQLTDRLALSAAGGSCDLPGGWRLQWQGDNLSLQPPAAGH.

An ATP-binding site is contributed by 40 to 45; sequence SGGQDS.

Belongs to the tRNA(Ile)-lysidine synthase family.

It is found in the cytoplasm. It catalyses the reaction cytidine(34) in tRNA(Ile2) + L-lysine + ATP = lysidine(34) in tRNA(Ile2) + AMP + diphosphate + H(+). Functionally, ligates lysine onto the cytidine present at position 34 of the AUA codon-specific tRNA(Ile) that contains the anticodon CAU, in an ATP-dependent manner. Cytidine is converted to lysidine, thus changing the amino acid specificity of the tRNA from methionine to isoleucine. This is tRNA(Ile)-lysidine synthase from Parasynechococcus marenigrum (strain WH8102).